A 282-amino-acid chain; its full sequence is Trans,polycis-polyprenyl diphosphate synthase ((2Z,6E)-farnesyl diphosphate specific) (282 aa).

Residues 1 to 30 (MSPKTVFSTDTHREPIPPQPHPSGARPPQL) form a disordered region. Residue aspartate 44 is part of the active site. Aspartate 44 contacts Mg(2+). Substrate-binding positions include 45–48 (GNGR), tryptophan 49, arginine 57, histidine 61, and 89–91 (STE). Catalysis depends on asparagine 92, which acts as the Proton acceptor. Substrate contacts are provided by residues tryptophan 93, arginine 95, arginine 212, and 218-220 (RLS). Glutamate 231 contributes to the Mg(2+) binding site. Residues 262–282 (GGAEPNPVGPPQSAAGAQGQD) form a disordered region.

Belongs to the UPP synthase family. In terms of assembly, homodimer. The cofactor is Mg(2+).

It carries out the reaction (2Z,6E)-farnesyl diphosphate + 10 isopentenyl diphosphate = di-trans,deca-cis-tridecaprenyl diphosphate + 10 diphosphate. The enzyme catalyses (2Z,6E)-farnesyl diphosphate + 11 isopentenyl diphosphate = di-trans,undeca-cis-tetradecaprenyl diphosphate + 11 diphosphate. It catalyses the reaction (2Z,6E)-farnesyl diphosphate + 9 isopentenyl diphosphate = di-trans,nona-cis-dodecaprenyl diphosphate + 9 diphosphate. In terms of biological role, catalyzes the synthesis of Z,E-mixed prenyl diphosphates by a condensation of isopentenyl diphosphate to an allylic diphosphate. It shows a large substrate specificity accepting dimethylallyl diphosphate (DMAPP), GPP, E,Efarnesyl diphosphate (FPP), E,E,E-geranylgeranyl diphosphate (GGPP), neryl diphosphate (Z-GPP), and (2Z,6E)-farnesyl diphosphate (Z,E-FPP) as allylic substrates. The enzyme exhibits the highest activity when Z,E-FPP is employed as an allylic substrate. The major product is dodecaprenyl diphosphate (C60) under every allylic substrate conditions, but the enzyme is also able to synthesize even C70 prenyl diphosphate as the maximum chain-length product. In Thermobifida fusca (strain YX), this protein is Trans,polycis-polyprenyl diphosphate synthase ((2Z,6E)-farnesyl diphosphate specific).